The sequence spans 345 residues: RDS/peripherin-like protein xRDS36 (345 aa).

Over 1–24 (MVLFKAKFSFQRRVKLAQTLWLLS) the chain is Cytoplasmic. A helical membrane pass occupies residues 25–43 (WLSVLVGCLTFGMGIFLKV). Residues 44–61 (QLWIHNEVMDNTTAHAVP) are Lumenal-facing. Asn-54 carries N-linked (GlcNAc...) asparagine glycosylation. A helical transmembrane segment spans residues 62 to 80 (NTVITAGLVGILLGYFAGK). At 81 to 99 (ISQASMDLTKYQRWKSFMM) the chain is on the cytoplasmic side. Residues 100-123 (PFFFLAILSCIVCLAALVLSVALR) traverse the membrane as a helical segment. The Lumenal portion of the chain corresponds to 124–264 (GTLEESLKIG…LGYYTGIMAT (141 aa)). N-linked (GlcNAc...) asparagine glycosylation occurs at Asn-229. A helical transmembrane segment spans residues 265-290 (NGAAVTLSFLLQASVLVSLRYVQTSM). At 291 to 345 (DKIRDPDDVEADTEGFLLEKGVMETVNSSLEKIKDLFKSNQVETAEGGGEGAAGS) the chain is on the cytoplasmic side.

The protein belongs to the PRPH2/ROM1 family. As to quaternary structure, homodimer; disulfide-linked. As to expression, rod specific.

It is found in the membrane. This is RDS/peripherin-like protein xRDS36 (rds36) from Xenopus laevis (African clawed frog).